A 455-amino-acid polypeptide reads, in one-letter code: Mitochondrial distribution and morphology protein 10 (455 aa).

Disordered stretches follow at residues 216-249 (WETT…EDAV), 278-311 (IRFS…PSPA), and 377-399 (PRSS…PLGE). Residues 217–227 (ETTNGENGTNT) are compositionally biased toward low complexity. A compositionally biased stretch (polar residues) spans 228-237 (SAPGNASNSR). The span at 291-301 (AQIPPPSPFTP) shows a compositional bias: pro residues.

This sequence belongs to the MDM10 family. In terms of assembly, component of the ER-mitochondria encounter structure (ERMES) or MDM complex, composed of MMM1, MDM10, MDM12 and MDM34. Associates with the mitochondrial outer membrane sorting assembly machinery SAM(core) complex.

The protein localises to the mitochondrion outer membrane. Component of the ERMES/MDM complex, which serves as a molecular tether to connect the endoplasmic reticulum and mitochondria. Components of this complex are involved in the control of mitochondrial shape and protein biogenesis and may function in phospholipid exchange. MDM10 is involved in the late assembly steps of the general translocase of the mitochondrial outer membrane (TOM complex). Functions in the TOM40-specific route of the assembly of outer membrane beta-barrel proteins, including the association of TOM40 with the receptor TOM22 and small TOM proteins. Can associate with the SAM(core) complex as well as the MDM12-MMM1 complex, both involved in late steps of the major beta-barrel assembly pathway, that is responsible for biogenesis of all outer membrane beta-barrel proteins. May act as a switch that shuttles between both complexes and channels precursor proteins into the TOM40-specific pathway. Plays a role in mitochondrial morphology and in the inheritance of mitochondria. The sequence is that of Mitochondrial distribution and morphology protein 10 from Coprinopsis cinerea (strain Okayama-7 / 130 / ATCC MYA-4618 / FGSC 9003) (Inky cap fungus).